The following is a 151-amino-acid chain: Transcriptional regulator MraZ (151 aa).

SpoVT-AbrB domains follow at residues 5-51 (AHEL…PVAE) and 81-124 (AEIL…GREQ).

It belongs to the MraZ family. In terms of assembly, forms oligomers.

Its subcellular location is the cytoplasm. It localises to the nucleoid. The sequence is that of Transcriptional regulator MraZ from Neisseria meningitidis serogroup C / serotype 2a (strain ATCC 700532 / DSM 15464 / FAM18).